Consider the following 89-residue polypeptide: Small ribosomal subunit protein uS15 (89 aa).

The segment covering 1-21 (MSVDAETKTKIIKDNARDKND) has biased composition (basic and acidic residues). Positions 1-26 (MSVDAETKTKIIKDNARDKNDTGSPE) are disordered.

It belongs to the universal ribosomal protein uS15 family. As to quaternary structure, part of the 30S ribosomal subunit. Forms a bridge to the 50S subunit in the 70S ribosome, contacting the 23S rRNA.

In terms of biological role, one of the primary rRNA binding proteins, it binds directly to 16S rRNA where it helps nucleate assembly of the platform of the 30S subunit by binding and bridging several RNA helices of the 16S rRNA. Functionally, forms an intersubunit bridge (bridge B4) with the 23S rRNA of the 50S subunit in the ribosome. This Erythrobacter litoralis (strain HTCC2594) protein is Small ribosomal subunit protein uS15.